Consider the following 418-residue polypeptide: Putative ion-transport protein YfeO (418 aa).

The next 12 helical transmembrane spans lie at 10-30 (LLLSLPAVAIGIASSLILIVV), 54-74 (DSPFWIIAILTLTGIAVGLVI), 99-119 (ALPGLIVALILGLAGGVSLGP), 120-140 (EHPIMTVNIALAVAIGARLLP), 149-169 (ILASAGTIGALFGTPVAAALI), 186-206 (LFAPLMAAAAGALTTGLFFHP), 223-243 (ILSGAIVAAIAIAAGMVAVWC), 258-278 (VLMLGVGGFILGILGVIAGPV), 300-320 (DYFLLAVIKLAALVVAAASGF), 322-342 (GGRIFPAVFVGVALGLMLHEH), 343-363 (VPAVPAAITVSCAILGIVLVV), and 386-406 (LLCIVMLPAWLLLAGKPIMMV).

It belongs to the chloride channel (TC 2.A.49) family.

It localises to the cell membrane. This chain is Putative ion-transport protein YfeO, found in Escherichia fergusonii (strain ATCC 35469 / DSM 13698 / CCUG 18766 / IAM 14443 / JCM 21226 / LMG 7866 / NBRC 102419 / NCTC 12128 / CDC 0568-73).